We begin with the raw amino-acid sequence, 695 residues long: UvrABC system protein B (695 aa).

In terms of domain architecture, Helicase ATP-binding spans 25-176 (KSILEGHRFQ…NQREVLRDLA (152 aa)). 38-45 (GATGTGKT) is an ATP binding site. The short motif at 91–114 (YYDYYQPEAYVPSTDTYIAKSSSI) is the Beta-hairpin element. The region spanning 454-617 (LLGEIYLRLE…ITPKPIIKKN (164 aa)) is the Helicase C-terminal domain. The region spanning 652–687 (PELIGQLELKMKAAAKNLEFEEAAQLRDQIKKLRQR) is the UVR domain.

This sequence belongs to the UvrB family. As to quaternary structure, forms a heterotetramer with UvrA during the search for lesions. Interacts with UvrC in an incision complex.

It is found in the cytoplasm. In terms of biological role, the UvrABC repair system catalyzes the recognition and processing of DNA lesions. A damage recognition complex composed of 2 UvrA and 2 UvrB subunits scans DNA for abnormalities. Upon binding of the UvrA(2)B(2) complex to a putative damaged site, the DNA wraps around one UvrB monomer. DNA wrap is dependent on ATP binding by UvrB and probably causes local melting of the DNA helix, facilitating insertion of UvrB beta-hairpin between the DNA strands. Then UvrB probes one DNA strand for the presence of a lesion. If a lesion is found the UvrA subunits dissociate and the UvrB-DNA preincision complex is formed. This complex is subsequently bound by UvrC and the second UvrB is released. If no lesion is found, the DNA wraps around the other UvrB subunit that will check the other stand for damage. In Synechococcus sp. (strain JA-3-3Ab) (Cyanobacteria bacterium Yellowstone A-Prime), this protein is UvrABC system protein B.